The following is a 369-amino-acid chain: Transaldolase (369 aa).

Residue Lys-140 is the Schiff-base intermediate with substrate of the active site.

The protein belongs to the transaldolase family. Type 2 subfamily.

The protein localises to the cytoplasm. It catalyses the reaction D-sedoheptulose 7-phosphate + D-glyceraldehyde 3-phosphate = D-erythrose 4-phosphate + beta-D-fructose 6-phosphate. It functions in the pathway carbohydrate degradation; pentose phosphate pathway; D-glyceraldehyde 3-phosphate and beta-D-fructose 6-phosphate from D-ribose 5-phosphate and D-xylulose 5-phosphate (non-oxidative stage): step 2/3. Transaldolase is important for the balance of metabolites in the pentose-phosphate pathway. This chain is Transaldolase, found in Parafrankia sp. (strain EAN1pec).